The primary structure comprises 772 residues: Transducin-like enhancer protein 4 (772 aa).

Disordered regions lie at residues 1 to 24 (MIRDLSKMYPQTRHPAPPHQPAQP) and 183 to 359 (LPIK…LTGL). Residues 1-137 (MIRDLSKMYP…AIIGQQLQAQ (137 aa)) form a q domain region. The interval 138–205 (HLSHAHGLPV…HQRDRDSIKS (68 aa)) is GP domain. Residues 184–203 (PIKDEKKHHDSDHQRDRDSI) show a composition bias toward basic and acidic residues. The segment covering 204-213 (KSSSVSPSAS) has biased composition (low complexity). A ccN domain region spans residues 206-275 (SSVSPSASFR…SPRGSPAHSP (70 aa)). Composition is skewed to basic and acidic residues over residues 216–253 (AAEKHRNSTDYSSESKKQKTEEKDIAARYDSDGEKSDD) and 274–290 (SPRENGLDKPRLLKKDA). The SP domain stretch occupies residues 276–452 (RENGLDKPRL…GGKPAYSFHV (177 aa)). The segment covering 291–306 (PISPASIASSSSTPSS) has biased composition (low complexity). Positions 307–316 (KSKEHSHNEK) are enriched in basic and acidic residues. Residues 318-329 (TTPVSKSNTPTP) are compositionally biased toward polar residues. 7 WD repeats span residues 484-522 (NHGEVVCAVTISNPTRHVYTGGKGCVKVWDISHPGNKSP), 530-569 (NRDNYIRSCRLLPDGRTLIVGGEASTLSIWDLAAPTPRIK), 574-613 (SSAPACYALAISPDSKVCFSCCSDGNIAVWDLHNQTLVRQ), 616-655 (GHTDGASCIDISNDGTKLWTGGLDNTVRSWDLREGRQLQQ), 657-696 (DFTSQIFSLGYCPTGEWLAVGMENSNVEVLHVTKPDKYQL), 698-737 (LHESCVLSLKFAHCGKWFVSTGKDNLLNAWRTPYGASIFQ), and 739-772 (KESSSVLSCDISVDDKYIVTGSGDKKATVYEVIY).

The protein belongs to the WD repeat Groucho/TLE family. In terms of assembly, interacts with tcf7, tcf7l1, ripply2.2/bowline, dscr6/ripply3 and foxd3. Associates with tbx6 in the presence of ripply2.2/bowline. Interacts with EFNB1 through the SP domain. Post-translationally, ubiquitinated by XIAP/BIRC4. Expressed at high levels in the spleen and ovary.

It localises to the nucleus. Transcriptional corepressor. Functions with ripply2.2/bowline to down regulate transcription of tbx6-dependent gene expression. Represses transcription of siamois and nodal3. This chain is Transducin-like enhancer protein 4 (tle4), found in Xenopus laevis (African clawed frog).